Here is a 334-residue protein sequence, read N- to C-terminus: Anthranilate phosphoribosyltransferase (334 aa).

Residues Gly-79, Gly-82–Asp-83, Ser-87, Asn-89–Thr-92, Lys-107–Ser-115, and Ser-119 contribute to the 5-phospho-alpha-D-ribose 1-diphosphate site. Gly-79 is a binding site for anthranilate. Residue Ser-91 participates in Mg(2+) binding. Residue Asn-110 participates in anthranilate binding. An anthranilate-binding site is contributed by Arg-165. Mg(2+) contacts are provided by Asp-224 and Glu-225.

It belongs to the anthranilate phosphoribosyltransferase family. In terms of assembly, homodimer. It depends on Mg(2+) as a cofactor.

The catalysed reaction is N-(5-phospho-beta-D-ribosyl)anthranilate + diphosphate = 5-phospho-alpha-D-ribose 1-diphosphate + anthranilate. It functions in the pathway amino-acid biosynthesis; L-tryptophan biosynthesis; L-tryptophan from chorismate: step 2/5. Catalyzes the transfer of the phosphoribosyl group of 5-phosphorylribose-1-pyrophosphate (PRPP) to anthranilate to yield N-(5'-phosphoribosyl)-anthranilate (PRA). The protein is Anthranilate phosphoribosyltransferase of Streptococcus gordonii (strain Challis / ATCC 35105 / BCRC 15272 / CH1 / DL1 / V288).